The following is a 283-amino-acid chain: NADPH-dependent 3-dehydrocapnine reductase (283 aa).

The active-site Proton acceptor is tyrosine 153.

This sequence belongs to the short-chain dehydrogenases/reductases (SDR) family.

The catalysed reaction is 3-oxocapnine + NADPH + H(+) = capnine + NADP(+). It participates in lipid metabolism. Functionally, reductase involved in the biosynthesis of capnine, a sulfonolipid present in the outer membrane of gliding Bacteroidetes and essential for gliding motility. Catalyzes the reduction of 3-dehydrocapnine to capnine. This chain is NADPH-dependent 3-dehydrocapnine reductase, found in Ornithobacterium rhinotracheale.